The sequence spans 409 residues: Elongation factor Tu (409 aa).

Residues 10-214 enclose the tr-type G domain; that stretch reads KPHVNIGTIG…AVDSYIPTPE (205 aa). The segment at 19–26 is G1; that stretch reads GHVDHGKT. 19 to 26 serves as a coordination point for GTP; sequence GHVDHGKT. Mg(2+) is bound at residue T26. The tract at residues 60-64 is G2; the sequence is GITIN. A G3 region spans residues 81–84; it reads DCPG. GTP contacts are provided by residues 81 to 85 and 136 to 139; these read DCPGH and NKKD. The interval 136-139 is G4; sequence NKKD. The G5 stretch occupies residues 174-176; that stretch reads SAK.

Belongs to the TRAFAC class translation factor GTPase superfamily. Classic translation factor GTPase family. EF-Tu/EF-1A subfamily. In terms of assembly, monomer.

The protein resides in the cytoplasm. The enzyme catalyses GTP + H2O = GDP + phosphate + H(+). In terms of biological role, GTP hydrolase that promotes the GTP-dependent binding of aminoacyl-tRNA to the A-site of ribosomes during protein biosynthesis. This is Elongation factor Tu from Microcystis aeruginosa (strain NIES-843 / IAM M-2473).